Reading from the N-terminus, the 456-residue chain is Ammonium transporter Amt2 (456 aa).

The next 11 helical transmembrane spans lie at L18–L38, I61–T81, W109–G129, I141–L161, A170–I190, I211–G231, V255–F275, V281–A301, I304–F324, V339–V359, and V377–F397.

It belongs to the ammonia transporter channel (TC 1.A.11.2) family. In terms of assembly, homotrimer. Interacts with both GlnK1 and GlnK2 after ammonium shock.

It localises to the cell membrane. In terms of biological role, involved in the uptake of ammonium/ammonia (NH(4)(+)/NH(3)). Transport is electrogenic. In Haloferax mediterranei (strain ATCC 33500 / DSM 1411 / JCM 8866 / NBRC 14739 / NCIMB 2177 / R-4) (Halobacterium mediterranei), this protein is Ammonium transporter Amt2.